A 564-amino-acid chain; its full sequence is Arginine--tRNA ligase (564 aa).

The 'HIGH' region motif lies at 136-146; the sequence is ANPTGPLHMGN.

The protein belongs to the class-I aminoacyl-tRNA synthetase family. As to quaternary structure, monomer.

The protein resides in the cytoplasm. It carries out the reaction tRNA(Arg) + L-arginine + ATP = L-arginyl-tRNA(Arg) + AMP + diphosphate. This chain is Arginine--tRNA ligase, found in Acetivibrio thermocellus (strain ATCC 27405 / DSM 1237 / JCM 9322 / NBRC 103400 / NCIMB 10682 / NRRL B-4536 / VPI 7372) (Clostridium thermocellum).